A 437-amino-acid chain; its full sequence is Amino-acid acetyltransferase (437 aa).

One can recognise an N-acetyltransferase domain in the interval 289–429 (ENIRLATSFD…EHYNYQRMSK (141 aa)).

It belongs to the acetyltransferase family. ArgA subfamily.

The protein localises to the cytoplasm. The enzyme catalyses L-glutamate + acetyl-CoA = N-acetyl-L-glutamate + CoA + H(+). It participates in amino-acid biosynthesis; L-arginine biosynthesis; N(2)-acetyl-L-ornithine from L-glutamate: step 1/4. This Actinobacillus pleuropneumoniae serotype 7 (strain AP76) protein is Amino-acid acetyltransferase.